A 535-amino-acid chain; its full sequence is Probable inorganic phosphate transporter 1-7 (535 aa).

At 1–24 (MAGDQLNVLNALDVAKTQWYHFTA) the chain is on the cytoplasmic side. The helical transmembrane segment at 25-45 (IIIAGMGFFTDAYDLFCISLV) threads the bilayer. At 46-70 (TKLLGRIYYHVDGSEKPGTLPPNVS) the chain is on the extracellular side. The helical transmembrane segment at 71-91 (AAVNGVAFCGTLAGQLFFGWL) threads the bilayer. The Cytoplasmic portion of the chain corresponds to 92-99 (GDKLGRKK). A helical membrane pass occupies residues 100-120 (VYGMTLMVMVLCSIASGLSFG). The Extracellular portion of the chain corresponds to 121–131 (SNPKTVMTTLC). The chain crosses the membrane as a helical span at residues 132–152 (FFRFWLGFGIGGDYPLSATIM). At 153–161 (SEYANKKTR) the chain is on the cytoplasmic side. Residues 162-182 (GAFIAAVFAMQGFGILTGGIF) form a helical membrane-spanning segment. At 183-211 (AIIVSAAFEAKFPAPTYQIDALASTVPQA) the chain is on the extracellular side. The chain crosses the membrane as a helical span at residues 212 to 232 (DYVWRIILMVGALPAAMTYYS). Topologically, residues 233 to 289 (RSKMPETARYTALVAKDAKLAASNMSKVLQVEIEAEQQGTEDKSNSFGLFSKEFMKR) are cytoplasmic. A helical transmembrane segment spans residues 290–310 (HGLHLLGTTSTWFLLDIAFYS). The Extracellular segment spans residues 311 to 345 (QNLFQKDIFSAIGWIPPAQTMNAIQEVFKIARAQT). Residues 346–366 (LIALCSTVPGYWFTVAFIDVI) traverse the membrane as a helical segment. At 367–368 (GR) the chain is on the cytoplasmic side. Residues 369–389 (FAIQMMGFFFMTVFMFALAIP) traverse the membrane as a helical segment. Residues 390–399 (YDHWTHKENR) are Extracellular-facing. The chain crosses the membrane as a helical span at residues 400 to 420 (IGFVAMYSLTFFFANFGPNAT). At 421–438 (TFVVPAEIFPARFRSTCH) the chain is on the cytoplasmic side. The helical transmembrane segment at 439–459 (GISAASGKLGAMVGAFGFLYL) threads the bilayer. Over 460–480 (AQSPDKTKTEHGYPPGIGVKN) the chain is Extracellular. Residues 481-501 (SLIVLGVVNLLGMVFTLLVPE) traverse the membrane as a helical segment. Over 502–535 (SKGKSLEEMSGENEQNDESSSSSNNNSNNAVSTA) the chain is Cytoplasmic. The tract at residues 506 to 535 (SLEEMSGENEQNDESSSSSNNNSNNAVSTA) is disordered. The segment covering 519–535 (ESSSSSNNNSNNAVSTA) has biased composition (low complexity). Ser520 is modified (phosphoserine).

Belongs to the major facilitator superfamily. Phosphate:H(+) symporter (TC 2.A.1.9) family. Mature pollen.

It is found in the membrane. High-affinity transporter for external inorganic phosphate. This chain is Probable inorganic phosphate transporter 1-7 (PHT1-7), found in Arabidopsis thaliana (Mouse-ear cress).